Reading from the N-terminus, the 793-residue chain is Serine/threonine-protein kinase MARK1 (793 aa).

Positions 1 to 40 are disordered; the sequence is MSARTPLPTVNERDTENHTSVDGYTETHIPPTKSSSRQNI. T5 bears the Phosphothreonine mark. In terms of domain architecture, Protein kinase spans 60–311; sequence YRLQKTIGKG…LEQIMKDRWM (252 aa). Residues 66-74 and K89 contribute to the ATP site; that span reads IGKGNFAKV. D182 serves as the catalytic Proton acceptor. T208 carries the phosphothreonine modification. T215 is subject to Phosphothreonine; by LKB1 and TAOK1. S219 carries the post-translational modification Phosphoserine; by GSK3-beta. The region spanning 329 to 370 is the UBA domain; the sequence is DLNDAKRIDIMVTMGFARDEINDALVSQKYDEVMATYILLGR. Disordered regions lie at residues 377 to 499 and 517 to 697; these read GGES…GGSM and LQNG…KPRS. Positions 380–403 are enriched in polar residues; it reads SLSSGNLCQRSRPSSDLNNSTLQS. 6 positions are modified to phosphoserine: S382, S390, S393, S403, S423, and S444. The span at 447-459 shows a compositional bias: basic and acidic residues; that stretch reads SEQKEEWDKDTAR. The span at 462–473 shows a compositional bias: polar residues; it reads GSTTVGSKSEVT. S475 carries the phosphoserine modification. A compositionally biased stretch (polar residues) spans 487-499; that stretch reads AGPSNNVYSGGSM. Low complexity-rich tracts occupy residues 523–547 and 585–599; these read SSLT…GPSA and PAAS…ASTP. At S588 the chain carries Phosphoserine. T613 bears the Phosphothreonine; by PKC/PRKCZ mark. A compositionally biased stretch (polar residues) spans 647-657; sequence GTSTGIISKIT. Basic and acidic residues-rich tracts occupy residues 661-676 and 683-695; these read VRRD…RTDT and EPKD…EAKP. The residue at position 666 (S666) is a Phosphoserine. Positions 744–793 constitute a KA1 domain; it reads DARQDSLVQWEMEVCKLPRLSLNGVRFKRISGTSIAFKNIASKIANELKL.

It belongs to the protein kinase superfamily. CAMK Ser/Thr protein kinase family. SNF1 subfamily. Interacts with MAPT/TAU. Mg(2+) serves as cofactor. Post-translationally, phosphorylation at Thr-613 by PRKCZ/aPKC in polarized epithelial cells inhibits the kinase activity. Phosphorylated at Thr-215 by STK11/LKB1 in complex with STE20-related adapter-alpha (STRADA) pseudo kinase and CAB39. Phosphorylation at Thr-215 by TAOK1 activates the kinase activity, leading to phosphorylation and detachment of MAPT/TAU from microtubules. Phosphorylation at Ser-219 by GSK3-beta (GSK3B) inhibits the kinase activity. As to expression, highly expressed in brain and spleen and at lower levels in kidney and skeletal muscle.

It is found in the cell membrane. The protein resides in the cytoplasm. The protein localises to the cytoskeleton. Its subcellular location is the cell projection. It localises to the dendrite. It carries out the reaction L-seryl-[protein] + ATP = O-phospho-L-seryl-[protein] + ADP + H(+). The enzyme catalyses L-threonyl-[protein] + ATP = O-phospho-L-threonyl-[protein] + ADP + H(+). The catalysed reaction is L-seryl-[tau protein] + ATP = O-phospho-L-seryl-[tau protein] + ADP + H(+). It catalyses the reaction L-threonyl-[tau protein] + ATP = O-phospho-L-threonyl-[tau protein] + ADP + H(+). With respect to regulation, activated by phosphorylation on Thr-215. Inhibited by phosphorylation at Ser-219. In terms of biological role, serine/threonine-protein kinase. Involved in cell polarity and microtubule dynamics regulation. Phosphorylates DCX, MAP2 and MAP4. Phosphorylates the microtubule-associated protein MAPT/TAU. Involved in cell polarity by phosphorylating the microtubule-associated proteins MAP2, MAP4 and MAPT/TAU at KXGS motifs, causing detachment from microtubules, and their disassembly. Involved in the regulation of neuronal migration through its dual activities in regulating cellular polarity and microtubule dynamics, possibly by phosphorylating and regulating DCX. Also acts as a positive regulator of the Wnt signaling pathway, probably by mediating phosphorylation of dishevelled proteins (DVL1, DVL2 and/or DVL3). The polypeptide is Serine/threonine-protein kinase MARK1 (Rattus norvegicus (Rat)).